The sequence spans 55 residues: Large ribosomal subunit protein bL32 (55 aa).

A compositionally biased stretch (basic residues) spans 1-19 (MAVPKFKKSRANTRARRSQ). The segment at 1–22 (MAVPKFKKSRANTRARRSQWKA) is disordered.

This sequence belongs to the bacterial ribosomal protein bL32 family.

This Corynebacterium urealyticum (strain ATCC 43042 / DSM 7109) protein is Large ribosomal subunit protein bL32.